A 234-amino-acid chain; its full sequence is Cyclin-J18 (234 aa).

This sequence belongs to the cyclin family.

The polypeptide is Cyclin-J18 (CYCJ18) (Arabidopsis thaliana (Mouse-ear cress)).